A 362-amino-acid chain; its full sequence is Phospho-N-acetylmuramoyl-pentapeptide-transferase (362 aa).

Transmembrane regions (helical) follow at residues 28-48 (AACM…IRWL), 72-92 (GTPT…TLLW), 100-120 (VWAV…DDYL), 134-154 (VKLI…MSLT), 170-190 (VLIP…MGAS), 201-221 (GLAI…AYLV), 241-261 (LTVF…FNAP), 265-285 (VFMG…VAIA), 290-310 (IVLA…IVQV), and 339-359 (TIVI…LATL).

The protein belongs to the glycosyltransferase 4 family. MraY subfamily. Mg(2+) serves as cofactor.

It localises to the cell inner membrane. It catalyses the reaction UDP-N-acetyl-alpha-D-muramoyl-L-alanyl-gamma-D-glutamyl-meso-2,6-diaminopimeloyl-D-alanyl-D-alanine + di-trans,octa-cis-undecaprenyl phosphate = di-trans,octa-cis-undecaprenyl diphospho-N-acetyl-alpha-D-muramoyl-L-alanyl-D-glutamyl-meso-2,6-diaminopimeloyl-D-alanyl-D-alanine + UMP. The protein operates within cell wall biogenesis; peptidoglycan biosynthesis. Catalyzes the initial step of the lipid cycle reactions in the biosynthesis of the cell wall peptidoglycan: transfers peptidoglycan precursor phospho-MurNAc-pentapeptide from UDP-MurNAc-pentapeptide onto the lipid carrier undecaprenyl phosphate, yielding undecaprenyl-pyrophosphoryl-MurNAc-pentapeptide, known as lipid I. This chain is Phospho-N-acetylmuramoyl-pentapeptide-transferase, found in Granulibacter bethesdensis (strain ATCC BAA-1260 / CGDNIH1).